Consider the following 637-residue polypeptide: Threonine--tRNA ligase (637 aa).

A TGS domain is found at 1 to 61; the sequence is MIKITLKDGK…NEDSTLEILT (61 aa). The tract at residues 242 to 532 is catalytic; the sequence is DHRKLGKELG…LTEHYAGAFP (291 aa). Zn(2+) is bound by residues Cys333, His384, and His509.

Belongs to the class-II aminoacyl-tRNA synthetase family. As to quaternary structure, homodimer. Zn(2+) is required as a cofactor.

The protein localises to the cytoplasm. It catalyses the reaction tRNA(Thr) + L-threonine + ATP = L-threonyl-tRNA(Thr) + AMP + diphosphate + H(+). Its function is as follows. Catalyzes the attachment of threonine to tRNA(Thr) in a two-step reaction: L-threonine is first activated by ATP to form Thr-AMP and then transferred to the acceptor end of tRNA(Thr). Also edits incorrectly charged L-seryl-tRNA(Thr). The sequence is that of Threonine--tRNA ligase from Clostridium novyi (strain NT).